The chain runs to 246 residues: Ribonuclease PH (246 aa).

Phosphate contacts are provided by residues R95 and 133–135 (GTR).

The protein belongs to the RNase PH family. In terms of assembly, homohexameric ring arranged as a trimer of dimers.

The enzyme catalyses tRNA(n+1) + phosphate = tRNA(n) + a ribonucleoside 5'-diphosphate. Functionally, phosphorolytic 3'-5' exoribonuclease that plays an important role in tRNA 3'-end maturation. Removes nucleotide residues following the 3'-CCA terminus of tRNAs; can also add nucleotides to the ends of RNA molecules by using nucleoside diphosphates as substrates, but this may not be physiologically important. Probably plays a role in initiation of 16S rRNA degradation (leading to ribosome degradation) during starvation. In Bordetella bronchiseptica (strain ATCC BAA-588 / NCTC 13252 / RB50) (Alcaligenes bronchisepticus), this protein is Ribonuclease PH.